A 387-amino-acid chain; its full sequence is Homoserine O-succinyltransferase (387 aa).

The region spanning 45–354 is the AB hydrolase-1 domain; that stretch reads NAVLVCHALN…DAPHGHDAFL (310 aa). Ser-151 serves as the catalytic Nucleophile. Arg-221 is a substrate binding site. Catalysis depends on residues Asp-317 and His-350. Substrate is bound at residue Asp-351.

The protein belongs to the AB hydrolase superfamily. MetX family. As to quaternary structure, homodimer.

It localises to the cytoplasm. It carries out the reaction L-homoserine + succinyl-CoA = O-succinyl-L-homoserine + CoA. The protein operates within amino-acid biosynthesis; L-methionine biosynthesis via de novo pathway; O-succinyl-L-homoserine from L-homoserine: step 1/1. Its function is as follows. Transfers a succinyl group from succinyl-CoA to L-homoserine, forming succinyl-L-homoserine. The polypeptide is Homoserine O-succinyltransferase (Methylibium petroleiphilum (strain ATCC BAA-1232 / LMG 22953 / PM1)).